The following is a 246-amino-acid chain: UL16-binding protein 6 (246 aa).

A signal peptide spans 1 to 25; that stretch reads MAAAAIPALLLCLPLLFLLFGWSRA. An MHC class I alpha-1 like region spans residues 29 to 117; that stretch reads DPHSLCYDIT…IQLENYTPKE (89 aa). Residues Cys50 and Cys66 are joined by a disulfide bond. N-linked (GlcNAc...) asparagine glycans are attached at residues Asn68 and Asn82. Residues 118–210 are MHC class I alpha-2 like; that stretch reads PLTLQARMSC…MDSTLEPSAG (93 aa). A disulfide bond links Cys127 and Cys190. Gly218 carries GPI-anchor amidated glycine lipidation. The propeptide at 219–246 is removed in mature form; that stretch reads TTQLRATATTLILCCLLIILPCFILPGI.

It belongs to the MHC class I family. Interacts with KLRK1/NKG2D. As to quaternary structure, (Microbial infection) In CMV-infected cells, interacts with the viral glycoprotein UL16; this interaction causes relocalization from the cell surface to the cytoplasm and prevents binding to and activation of KLRK1/NKG2D, providing CMV with an immune evasion mechanism. Widely expressed. Expressed in trachea. Constitutively expressed in peripheral blood mononuclear cells, including B-cells and natural killer cells, as well as CD4+ and CD8+ T-cells and monocytes. Tends to be up-regulated in various lymphoid malignancies, including chronic lymphocytic leukemia.

Its subcellular location is the cell membrane. The protein localises to the endoplasmic reticulum. Binds and activates the KLRK1/NKG2D receptor, mediating natural killer cell cytotoxicity. The chain is UL16-binding protein 6 (RAET1L) from Homo sapiens (Human).